Here is a 367-residue protein sequence, read N- to C-terminus: Cystinosin (367 aa).

Residues 1 to 22 (MRRNWLLILTLFLLMFIEKYES) form the signal peptide. The Lumenal portion of the chain corresponds to 23 to 125 (TVSLTAPPTV…LVIHSRIVSI (103 aa)). N-linked (GlcNAc...) asparagine glycans are attached at residues Asn-36, Asn-51, Asn-66, Asn-84, Asn-104, and Asn-107. Residues 123–189 (VSIINQVIGW…LLWVPYIQEE (67 aa)) enclose the PQ-loop 1 domain. A helical transmembrane segment spans residues 126–150 (INQVIGWIYFMAWSVSFYPQVIQNW). At 151–159 (RRKSVIGLS) the chain is on the cytoplasmic side. Residues 160–179 (FDFLALNLTGFVAYSVFNIG) traverse the membrane as a helical segment. An L-cystine-binding site is contributed by Asn-166. Residues 180–202 (LLWVPYIQEEFLLKYPNGVNPVD) are Lumenal-facing. The helical transmembrane segment at 203 to 225 (SNDAFFSLHAVALTLIVILQCCL) threads the bilayer. Residue Asp-205 participates in H(+) binding. At 226-234 (YERGNQRVS) the chain is on the cytoplasmic side. Residues 235 to 257 (WPSIGFLVLAWLFVLVTMIVAAV) form a helical membrane-spanning segment. The Lumenal segment spans residues 258 to 263 (GITTWL). The PQ-loop 2 domain maps to 263-328 (LQFLFCFSYI…QSYNNDQWTL (66 aa)). The chain crosses the membrane as a helical span at residues 264-289 (QFLFCFSYIKLIITLIKYFPQAYMNF). L-cystine-binding residues include Lys-273, Lys-280, and Tyr-281. Residues 290–298 (YYKSTKGWS) are Cytoplasmic-facing. A helical membrane pass occupies residues 299–308 (IGGVLLDFTG). L-cystine is bound at residue Asp-305. Asp-305 is a H(+) binding site. Topologically, residues 309 to 331 (GSFSLLQMFLQSYNNDQWTLIFG) are lumenal. Residues 332–354 (DPTKFGLGVFTIFFDVVFFIQHF) traverse the membrane as a helical segment. Residue Asp-346 participates in H(+) binding. Residues 355–367 (YLYRKKPGYDQLN) are Cytoplasmic-facing. The Lysosomal targeting motif signature appears at 362–366 (GYDQL).

It belongs to the cystinosin family. As to quaternary structure, interacts with components of the V-ATPase complex. Interacts with components of the Ragulator complex. Interacts with RRAGA/RagA and RRAGC/RagC. Interacts with AP-3 complex subunit mu (AP3M1 or AP3M2).

The protein localises to the lysosome membrane. Its subcellular location is the melanosome membrane. The catalysed reaction is L-cystine(out) + H(+)(out) = L-cystine(in) + H(+)(in). Its activity is regulated as follows. Switches between a lumen- and a cytosol-open conformation: pH induces conformational changes and shifts the equilibrium to facilitate the transition between the lumen- and cytosol-open conformation, thereby promoting cystine transport. Protonation of specific aspartate residues (Asp-205, Asp-305 and Asp-346) favors the cytosol-open conformation. Functionally, cystine/H(+) symporter that mediates export of cystine, the oxidized dimer of cysteine, from lysosomes. Plays an important role in melanin synthesis by catalyzing cystine export from melanosomes, possibly by inhibiting pheomelanin synthesis. In addition to cystine export, also acts as a positive regulator of mTORC1 signaling in kidney proximal tubular cells, via interactions with components of the v-ATPase and Ragulator complexes. Also involved in small GTPase-regulated vesicle trafficking and lysosomal localization of LAMP2A, independently of cystine transporter activity. In Mus musculus (Mouse), this protein is Cystinosin.